The chain runs to 335 residues: D-alanine--D-alanine ligase (335 aa).

The ATP-grasp domain maps to 124–329; the sequence is KMWFSALGVP…FTHYLYSNIK (206 aa). 154-209 provides a ligand contact to ATP; it reads ALENWGSIFIKAASQGSSVGCYRVDSQDELVSSLEQAFSFSPYVIVEKTINARELE. Residues Asp-283, Glu-296, and Asn-298 each coordinate Mg(2+).

Belongs to the D-alanine--D-alanine ligase family. Mg(2+) serves as cofactor. Mn(2+) is required as a cofactor.

The protein localises to the cytoplasm. It catalyses the reaction 2 D-alanine + ATP = D-alanyl-D-alanine + ADP + phosphate + H(+). It participates in cell wall biogenesis; peptidoglycan biosynthesis. Cell wall formation. This Shewanella woodyi (strain ATCC 51908 / MS32) protein is D-alanine--D-alanine ligase.